Consider the following 301-residue polypeptide: Acetylglutamate kinase (301 aa).

Residues 72–73 (GG), Arg-94, and Asn-199 contribute to the substrate site.

It belongs to the acetylglutamate kinase family. ArgB subfamily.

The protein localises to the cytoplasm. It catalyses the reaction N-acetyl-L-glutamate + ATP = N-acetyl-L-glutamyl 5-phosphate + ADP. It participates in amino-acid biosynthesis; L-arginine biosynthesis; N(2)-acetyl-L-ornithine from L-glutamate: step 2/4. Catalyzes the ATP-dependent phosphorylation of N-acetyl-L-glutamate. In Bartonella quintana (strain Toulouse) (Rochalimaea quintana), this protein is Acetylglutamate kinase.